The primary structure comprises 502 residues: ATP synthase subunit beta, chloroplastic (502 aa).

Ser17 is subject to Phosphoserine. 176–183 (GGAGVGKT) provides a ligand contact to ATP.

This sequence belongs to the ATPase alpha/beta chains family. F-type ATPases have 2 components, CF(1) - the catalytic core - and CF(0) - the membrane proton channel. CF(1) has five subunits: alpha(3), beta(3), gamma(1), delta(1), epsilon(1). CF(0) has four main subunits: a(1), b(1), b'(1) and c(9-12).

The protein localises to the plastid. It localises to the chloroplast thylakoid membrane. The catalysed reaction is ATP + H2O + 4 H(+)(in) = ADP + phosphate + 5 H(+)(out). Its function is as follows. Produces ATP from ADP in the presence of a proton gradient across the membrane. The catalytic sites are hosted primarily by the beta subunits. This chain is ATP synthase subunit beta, chloroplastic, found in Lepidium virginicum (Virginia pepperweed).